The sequence spans 481 residues: O-acetyltransferase andG (481 aa).

This sequence belongs to the fumigaclavine B O-acetyltransferase family. In terms of assembly, monomer.

The protein operates within secondary metabolite biosynthesis; terpenoid biosynthesis. Functionally, O-acetyltransferase; part of the gene cluster that mediates the biosynthesis of anditomin, a fungal meroterpenoid. The first step of the pathway is the synthesis of 3,5-dimethylorsellinic acid (DMOA) by the polyketide synthase andM. DMOA is then converted to the phthalide compound 5,7-dihydroxy-4,6-dimethylphthalide (DHDMP) by the cytochrome P450 monooxygenase andK, which is further prenylated by the prenyltransferase andD to yield farnesyl-DHDMP. Further epoxidation by the FAD-dependent monooxygenase andE leads to epoxyfarnesyl-DHDMP. The next step involves the terpene cyclase andB that converts epoxyfarnesyl-DHDMP into preandiloid A through opening of the epoxide ring followed by the cyclization of the farnesyl moiety. Preandiloid A is in turn oxidized at the C-3 hydroxyl group to yield preandiloid B by the dehydrogenase andC. The dioxygenase andA is solely responsible for the dehydrogenation of preandiloid B leading to the enone preandiloid C, as well as for the intriguing structural rearrangement to generate the bicyclo[2.2.2]octane core, transforming preandiloid C into andiconin. FAD-binding monooxygenase andJ then produces andilesin D which is reduced by dehydrogenase andI to yield andilesin A. Action of acetyltransferase andG followed by a spontaneous acetate elimination leads then to andilesin B, which is in turn substrate of the short chain dehydrogenase andH to yield andilesin C. Finally, the dioxygenase andF catalyzes the transformation of andilesin C to anditomin. This chain is O-acetyltransferase andG, found in Emericella variicolor (Aspergillus stellatus).